A 1045-amino-acid chain; its full sequence is MDIS1-interacting receptor like kinase 2 (1045 aa).

A signal peptide spans 1-43 (MNKTNPERKISLTSFKERMACKEKPRDLQVLLIISIVLSCSFA). Residues 44-709 (VSATVEEANA…SKKSHKDRNL (666 aa)) are Extracellular-facing. N-linked (GlcNAc...) asparagine glycosylation is found at Asn-63, Asn-77, Asn-99, and Asn-119. LRR repeat units follow at residues 92 to 116 (LGSI…PFSS), 117 to 140 (LPNL…LWGR), 141 to 165 (FSKL…LGDL), 166 to 189 (SNLD…IGRL), 191 to 212 (KVTE…SFGN), 213 to 237 (LTKL…IGNL), 238 to 260 (PNLR…SFGN), 262 to 285 (KNVT…IGNM), 286 to 309 (TALD…LGNI), 311 to 333 (TLAV…LGEM), 334 to 356 (ESMI…SFGK), 357 to 381 (LTAL…IANS), 383 to 405 (ELTV…ICRG), 406 to 429 (GKLE…LRDC), 431 to 452 (SLIR…AFGV), 453 to 476 (YPTL…NWEQ), 477 to 501 (SQKL…IWNM), 502 to 525 (TQLS…ISNI), 527 to 549 (RISK…IRLL), 550 to 573 (TNLE…LNNL), 575 to 597 (RLYY…LTKL), 598 to 620 (SQLQ…QFRS), 621 to 644 (LQNL…SFKD), and 646 to 670 (LALT…AFRN). N-linked (GlcNAc...) asparagine glycosylation is found at Asn-179 and Asn-212. Residues Asn-249, Asn-263, and Asn-284 are each glycosylated (N-linked (GlcNAc...) asparagine). A glycan (N-linked (GlcNAc...) asparagine) is linked at Asn-323. N-linked (GlcNAc...) asparagine glycosylation is found at Asn-380, Asn-393, and Asn-410. Residues Asn-487 and Asn-500 are each glycosylated (N-linked (GlcNAc...) asparagine). Asn-580 carries N-linked (GlcNAc...) asparagine glycosylation. An N-linked (GlcNAc...) asparagine glycan is attached at Asn-633. N-linked (GlcNAc...) asparagine glycosylation is present at Asn-687. Residues 710 to 730 (IIYILVPIIGAIIILSVCAGI) form a helical membrane-spanning segment. The Cytoplasmic segment spans residues 731–1045 (FICFRKRTKQ…TMLSISTAFS (315 aa)). The residue at position 772 (Thr-772) is a Phosphothreonine. The region spanning 775-1045 (FDPKYLIGTG…TMLSISTAFS (271 aa)) is the Protein kinase domain. Residues 781 to 789 (IGTGGHGKV) and Lys-802 contribute to the ATP site. Phosphotyrosine occurs at positions 853 and 892. Catalysis depends on Asp-905, which acts as the Proton acceptor. Ser-938 is modified (phosphoserine). 2 positions are modified to phosphotyrosine: Tyr-946 and Tyr-953.

This sequence belongs to the protein kinase superfamily. Ser/Thr protein kinase family. As to quaternary structure, interacts with MDIS1 and LURE1.2. Binds to SCOOP12; this interaction triggers the formation of complex between MIK2 and the BAK1/SERK3 and SERK4 coreceptors. As to expression, expressed in pollen tubes. Highly expressed in shoots, roots and leaves.

Its subcellular location is the cell membrane. It catalyses the reaction L-seryl-[protein] + ATP = O-phospho-L-seryl-[protein] + ADP + H(+). The catalysed reaction is L-threonyl-[protein] + ATP = O-phospho-L-threonyl-[protein] + ADP + H(+). Its function is as follows. Acts as a receptor of SCOOP peptides from Brassicaceae plants regulating multiple processing including plant growth, development and stress responses. Perception of SCOOP peptides induces the association of MIK2 with the coreceptors BAK1/SERK3 and SERK4 and relays the signaling through the activation of receptor-like cytosolic kinases (RLCKs) BIK1 and PBL1. Also able to detect SCOOP-like proteins (SCOOPL) present in fungal Fusarium spp. and bacterial Comamonadaceae to elicit various immune responses, including growth inhibition, ROS production, calcium Ca(2+) influx, MAPK activation and MYB51 promoter activation in roots, thus being required for resistance to several root pathogens. Involved in the pollen tube perception of the female signal. Required to trigger defense responses toward generalist herbivores such as Spodoptera littoralis, probably via the activation of jasmonate and indole glucosinolate biosynthesis. The polypeptide is MDIS1-interacting receptor like kinase 2 (Arabidopsis thaliana (Mouse-ear cress)).